A 100-amino-acid polypeptide reads, in one-letter code: UPF0298 protein lp_2135 (100 aa).

Belongs to the UPF0298 family.

It is found in the cytoplasm. The sequence is that of UPF0298 protein lp_2135 from Lactiplantibacillus plantarum (strain ATCC BAA-793 / NCIMB 8826 / WCFS1) (Lactobacillus plantarum).